A 138-amino-acid chain; its full sequence is Probable lactoylglutathione lyase (138 aa).

The 125-residue stretch at 5–129 (RILHTMLRVG…DGYMIELIQN (125 aa)) folds into the VOC domain. Histidine 8 serves as a coordination point for Ni(2+). Arginine 12 is a binding site for substrate. Glutamate 59 is a binding site for Ni(2+). Residues asparagine 63 and histidine 77 each coordinate substrate. Ni(2+) contacts are provided by histidine 77 and glutamate 125. Glutamate 125 acts as the Proton donor/acceptor in catalysis.

It belongs to the glyoxalase I family. The cofactor is Ni(2+).

The catalysed reaction is (R)-S-lactoylglutathione = methylglyoxal + glutathione. It functions in the pathway secondary metabolite metabolism; methylglyoxal degradation; (R)-lactate from methylglyoxal: step 1/2. Functionally, catalyzes the conversion of hemimercaptal, formed from methylglyoxal and glutathione, to S-lactoylglutathione. This chain is Probable lactoylglutathione lyase (gloA), found in Vibrio cholerae serotype O1 (strain ATCC 39315 / El Tor Inaba N16961).